The sequence spans 504 residues: Histidine ammonia-lyase (504 aa).

The 5-imidazolinone (Ala-Gly) cross-link spans 141-143 (ASG). Ser-142 is subject to 2,3-didehydroalanine (Ser).

This sequence belongs to the PAL/histidase family. Contains an active site 4-methylidene-imidazol-5-one (MIO), which is formed autocatalytically by cyclization and dehydration of residues Ala-Ser-Gly.

Its subcellular location is the cytoplasm. The catalysed reaction is L-histidine = trans-urocanate + NH4(+). Its pathway is amino-acid degradation; L-histidine degradation into L-glutamate; N-formimidoyl-L-glutamate from L-histidine: step 1/3. The chain is Histidine ammonia-lyase from Geobacillus kaustophilus (strain HTA426).